The primary structure comprises 807 residues: Spondin-1 (807 aa).

The N-terminal stretch at 1–28 (MRLSPVLLRLSRGPALLALALPLAVALA) is a signal peptide. Residues 29 to 194 (FSDETLDKVP…DSTFDGVTDK (166 aa)) form the Reelin domain. 17 disulfides stabilise this stretch: C44/C128, C156/C182, C199/C336, C200/C340, C202/C415, C443/C480, C454/C489, C459/C494, C502/C538, C513/C517, C548/C554, C559/C595, C570/C574, C605/C610, C615/C650, C626/C630, and C660/C665. The 194-residue stretch at 195 to 388 (PILDCCACGT…LTSLDHPQSP (194 aa)) folds into the Spondin domain. Residue N214 is glycosylated (N-linked (GlcNAc...) asparagine). 3 residues coordinate Ca(2+): D325, D354, and D358. TSP type-1 domains are found at residues 442–495 (TCIY…PGCS), 501–555 (TCTM…EECS), 558–611 (SCLT…PECH), 614–666 (PCLL…PECP), 668–721 (DCEL…RKCL), and 754–806 (GCRM…NVHP). N-linked (GlcNAc...) asparagine glycosylation is present at N681.

Binds to the central extracellular domain of APP and inhibits beta-secretase cleavage of APP.

It localises to the secreted. The protein localises to the extracellular space. It is found in the extracellular matrix. Cell adhesion protein that promotes the attachment of spinal cord and sensory neuron cells and the outgrowth of neurites in vitro. May contribute to the growth and guidance of axons in both the spinal cord and the PNS. Major factor for vascular smooth muscle cell. The chain is Spondin-1 (SPON1) from Bos taurus (Bovine).